The primary structure comprises 183 residues: Ribulose bisphosphate carboxylase small subunit, chloroplastic 4 (183 aa).

A chloroplast-targeting transit peptide spans 1–57; the sequence is MASSLMSNAATTMAAATTTAQANMVAPFNGLKSISAFPVTRKNNDITSVASNGGRVQ.

Belongs to the RuBisCO small chain family. In terms of assembly, heterohexadecamer of 8 large and 8 small subunits.

It is found in the plastid. The protein resides in the chloroplast. Its function is as follows. RuBisCO catalyzes two reactions: the carboxylation of D-ribulose 1,5-bisphosphate, the primary event in carbon dioxide fixation, as well as the oxidative fragmentation of the pentose substrate. Both reactions occur simultaneously and in competition at the same active site. Although the small subunit is not catalytic it is essential for maximal activity. The chain is Ribulose bisphosphate carboxylase small subunit, chloroplastic 4 from Mesembryanthemum crystallinum (Common ice plant).